Here is a 134-residue protein sequence, read N- to C-terminus: MALQLGLFLIWAGVSVFLQLDPVNGDQDEGVSTEPTQDGPAELPEDEECVFPFVYRNRKHFDCTVHGSLFPWCSLDADYVGRWKYCAQRDYAKCVFPFIYGGKKYETCTKIGSMWMSWCSLSPNYDKDRAWKYC.

An N-terminal signal peptide occupies residues 1 to 25; it reads MALQLGLFLIWAGVSVFLQLDPVNG. Residue Thr36 is glycosylated (O-linked (GalNAc...) threonine). Fibronectin type-II domains lie at 44 to 88 and 89 to 134; these read PEDE…YCAQ and RDYA…WKYC. 4 disulfide bridges follow: Cys49-Cys73, Cys63-Cys86, Cys94-Cys119, and Cys108-Cys134.

It belongs to the seminal plasma protein family. As to quaternary structure, homodimer. O-linked glycan consists of Gal-GalNAc disaccharide which is modified with a sialic acid residue (macro- and/or microheterogeneity account for differences between BSP-A1 and BSP-A2). As to expression, major component of seminal plasma.

It localises to the secreted. Its function is as follows. Could enhance the fertilizing capacity of bull spermatozoa upon interaction with heparin-like glycosaminoglycans present in the female genital tract. Exhibits both simulatory and inhibitory actions on the release of pituitary gonadotropins. The polypeptide is Seminal plasma protein PDC-109 (Bos taurus (Bovine)).